We begin with the raw amino-acid sequence, 355 residues long: Chorismate synthase (355 aa).

R48 contributes to the NADP(+) binding site. Residues 125-127, 239-240, G280, 295-299, and R321 contribute to the FMN site; these read RSS, NA, and KPVAT.

This sequence belongs to the chorismate synthase family. In terms of assembly, homotetramer. FMNH2 serves as cofactor.

It carries out the reaction 5-O-(1-carboxyvinyl)-3-phosphoshikimate = chorismate + phosphate. It participates in metabolic intermediate biosynthesis; chorismate biosynthesis; chorismate from D-erythrose 4-phosphate and phosphoenolpyruvate: step 7/7. In terms of biological role, catalyzes the anti-1,4-elimination of the C-3 phosphate and the C-6 proR hydrogen from 5-enolpyruvylshikimate-3-phosphate (EPSP) to yield chorismate, which is the branch point compound that serves as the starting substrate for the three terminal pathways of aromatic amino acid biosynthesis. This reaction introduces a second double bond into the aromatic ring system. This is Chorismate synthase from Flavobacterium psychrophilum (strain ATCC 49511 / DSM 21280 / CIP 103535 / JIP02/86).